Reading from the N-terminus, the 91-residue chain is UPF0250 protein HCH_05838 (91 aa).

It belongs to the UPF0250 family.

The polypeptide is UPF0250 protein HCH_05838 (Hahella chejuensis (strain KCTC 2396)).